The following is a 147-amino-acid chain: Methylmalonyl-CoA mutase homolog (147 aa).

To methylmalonyl-CoA mutase.

The sequence is that of Methylmalonyl-CoA mutase homolog from Alkalihalophilus pseudofirmus (strain ATCC BAA-2126 / JCM 17055 / OF4) (Bacillus pseudofirmus).